Consider the following 510-residue polypeptide: Conditioned medium factor receptor 1 (510 aa).

The Cytoplasmic portion of the chain corresponds to 1-36; sequence MDSKYIQKTLSAITEQITKNAAVQKVLDNKFVKEHK. A helical transmembrane segment spans residues 37–55; sequence YAAAAATVGLGVVAATTIV. The Extracellular segment spans residues 56-510; it reads KAVNCEGKRY…QGKKQIKKLD (455 aa).

The protein localises to the membrane. Functionally, receptor for cmfA, that appears to mediate the G-independent cmfA signal transduction. The sequence is that of Conditioned medium factor receptor 1 (cmfB) from Dictyostelium discoideum (Social amoeba).